The following is a 649-amino-acid chain: Protein phosphatase Slingshot homolog 3 (649 aa).

Residues 1-20 (MALVTVSRSPPASGHSTPVG) are compositionally biased toward polar residues. The segment at 1–32 (MALVTVSRSPPASGHSTPVGPTQDRVVRRRGR) is disordered. Ala-2 carries the N-acetylalanine modification. A phosphoserine mark is found at Ser-9 and Ser-38. Positions 49-90 (LQDGGDSNVASEADSEPMEEPSGEEQPTEDQTDKGQGLQSPW) are disordered. Residues 61–78 (ADSEPMEEPSGEEQPTED) show a composition bias toward acidic residues. The residue at position 88 (Ser-88) is a Phosphoserine. One can recognise a DEK-C domain in the interval 266-321 (EKMEQAILAELWQVLDTSDLDSVTSKEIRQALELRLGCPLQQYRDFIDNQMLLLMA). A Tyrosine-protein phosphatase domain is found at 325 to 466 (RASRIFPHLY…LRTYQGILTA (142 aa)). Cys-410 serves as the catalytic Phosphocysteine intermediate. 2 stretches are compositionally biased toward low complexity: residues 541 to 551 (LEPSESESTPE) and 608 to 627 (TRAFQEQGQGQEQSEPGMSS). Disordered regions lie at residues 541–586 (LEPS…KGPW) and 608–649 (TRAF…EDKA). Basic and acidic residues predominate over residues 639-649 (SVDDSREEDKA).

The protein belongs to the protein-tyrosine phosphatase family. In terms of assembly, does not bind to, or colocalize with, filamentous actin. In terms of tissue distribution, expressed in brain, small intestine and testis. Also expressed at lower levels in heart, kidney, liver, spleen and thymus.

Its subcellular location is the cytoplasm. It localises to the cytoskeleton. It is found in the nucleus. It carries out the reaction O-phospho-L-tyrosyl-[protein] + H2O = L-tyrosyl-[protein] + phosphate. It catalyses the reaction O-phospho-L-seryl-[protein] + H2O = L-seryl-[protein] + phosphate. The enzyme catalyses O-phospho-L-threonyl-[protein] + H2O = L-threonyl-[protein] + phosphate. Functionally, protein phosphatase which may play a role in the regulation of actin filament dynamics. Can dephosphorylate and activate the actin binding/depolymerizing factor cofilin, which subsequently binds to actin filaments and stimulates their disassembly. The chain is Protein phosphatase Slingshot homolog 3 (Ssh3) from Mus musculus (Mouse).